The sequence spans 235 residues: Deoxyribose-phosphate aldolase (235 aa).

The active-site Proton donor/acceptor is aspartate 107. The active-site Schiff-base intermediate with acetaldehyde is the lysine 167. Lysine 197 (proton donor/acceptor) is an active-site residue.

It belongs to the DeoC/FbaB aldolase family. DeoC type 1 subfamily. As to quaternary structure, homotetramer.

The protein localises to the cytoplasm. It catalyses the reaction 2-deoxy-D-ribose 5-phosphate = D-glyceraldehyde 3-phosphate + acetaldehyde. Its pathway is carbohydrate degradation; 2-deoxy-D-ribose 1-phosphate degradation; D-glyceraldehyde 3-phosphate and acetaldehyde from 2-deoxy-alpha-D-ribose 1-phosphate: step 2/2. Functionally, catalyzes a reversible aldol reaction between acetaldehyde and D-glyceraldehyde 3-phosphate to generate 2-deoxy-D-ribose 5-phosphate. In Aeropyrum pernix (strain ATCC 700893 / DSM 11879 / JCM 9820 / NBRC 100138 / K1), this protein is Deoxyribose-phosphate aldolase.